The primary structure comprises 137 residues: Ribosomal RNA large subunit methyltransferase H (137 aa).

S-adenosyl-L-methionine is bound by residues Leu-56, Gly-85, and 104–109 (LSPLTL).

The protein belongs to the RNA methyltransferase RlmH family. Homodimer.

The protein resides in the cytoplasm. The catalysed reaction is pseudouridine(1915) in 23S rRNA + S-adenosyl-L-methionine = N(3)-methylpseudouridine(1915) in 23S rRNA + S-adenosyl-L-homocysteine + H(+). Specifically methylates the pseudouridine at position 1915 (m3Psi1915) in 23S rRNA. The sequence is that of Ribosomal RNA large subunit methyltransferase H from Thermus thermophilus (strain ATCC 27634 / DSM 579 / HB8).